Here is a 435-residue protein sequence, read N- to C-terminus: Phospholipase A1 EG1, chloroplastic/mitochondrial (435 aa).

The N-terminal 31 residues, M1 to G31, are a transit peptide targeting the chloroplast and mitochondrion. The GXSXG motif lies at G264–G268. The active-site Acyl-ester intermediate is S266. Catalysis depends on charge relay system residues D324 and H371.

It belongs to the AB hydrolase superfamily. Lipase family.

The protein resides in the mitochondrion. Its subcellular location is the plastid. The protein localises to the chloroplast. The enzyme catalyses a 1,2-diacyl-sn-glycero-3-phosphocholine + H2O = a 2-acyl-sn-glycero-3-phosphocholine + a fatty acid + H(+). Phospholipase that releases free fatty acids from phospholipids. Catalyzes the initial step of jasmonate (JA) biosynthesis. Required for the biosynthesis of endogenous JA in seedling, inflorescence and spikelets. Not essential for JA biosynthesis after wounding. Mediates spikelet development and specification of empty-glume identity. Functions in a high temperature-dependent manner to maintain floral developmental robustness under heat stress conditions. Functions by safeguarding the expression of several floral identity genes, such as MADS1, MADS6 and G1. The polypeptide is Phospholipase A1 EG1, chloroplastic/mitochondrial (Oryza sativa subsp. indica (Rice)).